We begin with the raw amino-acid sequence, 445 residues long: tRNA(Ile)-lysidine synthase (445 aa).

30-35 (SGGLDS) lines the ATP pocket.

Belongs to the tRNA(Ile)-lysidine synthase family.

The protein localises to the cytoplasm. The enzyme catalyses cytidine(34) in tRNA(Ile2) + L-lysine + ATP = lysidine(34) in tRNA(Ile2) + AMP + diphosphate + H(+). In terms of biological role, ligates lysine onto the cytidine present at position 34 of the AUA codon-specific tRNA(Ile) that contains the anticodon CAU, in an ATP-dependent manner. Cytidine is converted to lysidine, thus changing the amino acid specificity of the tRNA from methionine to isoleucine. The protein is tRNA(Ile)-lysidine synthase of Alkalilimnicola ehrlichii (strain ATCC BAA-1101 / DSM 17681 / MLHE-1).